The primary structure comprises 508 residues: Photosystem II CP47 reaction center protein (508 aa).

Transmembrane regions (helical) follow at residues 21–36 (SVHIMHTALVSGWAGS), 101–115 (IVFSGLCFLAAIWHW), 140–156 (GIHLFLSGVACFGFGAF), 203–218 (IAAGTLGILAGLFHLS), 237–252 (VLSSSIAAVFFAAFVV), and 457–472 (SFALLFFFGHIWHGAR).

The protein belongs to the PsbB/PsbC family. PsbB subfamily. As to quaternary structure, PSII is composed of 1 copy each of membrane proteins PsbA, PsbB, PsbC, PsbD, PsbE, PsbF, PsbH, PsbI, PsbJ, PsbK, PsbL, PsbM, PsbT, PsbX, PsbY, PsbZ, Psb30/Ycf12, at least 3 peripheral proteins of the oxygen-evolving complex and a large number of cofactors. It forms dimeric complexes. Binds multiple chlorophylls. PSII binds additional chlorophylls, carotenoids and specific lipids. serves as cofactor.

It localises to the plastid. The protein resides in the chloroplast thylakoid membrane. Its function is as follows. One of the components of the core complex of photosystem II (PSII). It binds chlorophyll and helps catalyze the primary light-induced photochemical processes of PSII. PSII is a light-driven water:plastoquinone oxidoreductase, using light energy to abstract electrons from H(2)O, generating O(2) and a proton gradient subsequently used for ATP formation. The polypeptide is Photosystem II CP47 reaction center protein (Nuphar advena (Common spatterdock)).